Here is a 213-residue protein sequence, read N- to C-terminus: Ribosomal RNA small subunit methyltransferase G (213 aa).

S-adenosyl-L-methionine is bound by residues Gly75, Phe80, Ile128–Glu129, and Arg144.

This sequence belongs to the methyltransferase superfamily. RNA methyltransferase RsmG family.

The protein resides in the cytoplasm. The catalysed reaction is guanosine(527) in 16S rRNA + S-adenosyl-L-methionine = N(7)-methylguanosine(527) in 16S rRNA + S-adenosyl-L-homocysteine. In terms of biological role, specifically methylates the N7 position of guanine in position 527 of 16S rRNA. The chain is Ribosomal RNA small subunit methyltransferase G from Brucella suis biovar 1 (strain 1330).